The sequence spans 550 residues: Hydroxylamine reductase (550 aa).

The [2Fe-2S] cluster site is built by Cys3, Cys6, Cys18, and Cys25. Hybrid [4Fe-2O-2S] cluster is bound by residues His249, Glu273, Cys317, Cys405, Cys433, Cys458, Glu492, and Lys494. Cysteine persulfide is present on Cys405.

Belongs to the HCP family. [2Fe-2S] cluster is required as a cofactor. It depends on hybrid [4Fe-2O-2S] cluster as a cofactor.

It localises to the cytoplasm. The catalysed reaction is A + NH4(+) + H2O = hydroxylamine + AH2 + H(+). Functionally, catalyzes the reduction of hydroxylamine to form NH(3) and H(2)O. This Salmonella typhi protein is Hydroxylamine reductase.